We begin with the raw amino-acid sequence, 276 residues long: Undecaprenyl-diphosphatase 1 (276 aa).

Helical transmembrane passes span 4 to 24, 46 to 63, 83 to 103, 108 to 128, 187 to 207, 217 to 237, and 252 to 272; these read ILICKALILGVVEGLTEFLPV, TFDVVIQFGAILAVCWEY, FTLNVVIATIPAIALGLLFEK, VLFSPVPVAFALVVGGAIILW, VATEFSFFLAIPIIFGATLYE, VDSLGLFVLGAVAAFVSAFVC, and VFAWYRIAFGLFVLLVGYSGW.

It belongs to the UppP family.

The protein localises to the cell inner membrane. The catalysed reaction is di-trans,octa-cis-undecaprenyl diphosphate + H2O = di-trans,octa-cis-undecaprenyl phosphate + phosphate + H(+). Its function is as follows. Catalyzes the dephosphorylation of undecaprenyl diphosphate (UPP). Confers resistance to bacitracin. The sequence is that of Undecaprenyl-diphosphatase 1 from Burkholderia lata (strain ATCC 17760 / DSM 23089 / LMG 22485 / NCIMB 9086 / R18194 / 383).